The sequence spans 561 residues: MAASAPSNSLPPADSYQLLPEAQKAGAAEDALYEAQVKEIEEWWASPRFAGIRRPYSAADVASKRGSQHFRYPSSVMATKLFNLIREREAKGEPIHTMGAIDPVQMTQQAPHQEVLYISGWACSSVLTSTNEVSPDFGDYPYNTVPNQVQRLAKAQSMHDRKQWDTRRKMSPDERSKTPYTDYLRPIIADGDTGHGGLSAVLKLAKLFAENGAAAVHFEDQLHGGKKCGHLAGKVLVPTGEHINRLNAARFQWDVMGSENLVIARTDSESGRLISSAIDVRDHEFILGIADPAVEPLAETLQSMEARGATGAEIDVFEAKWVKSSTLVTFDEAAVAHMKKEGVSQAKIDEYLSATALDRDMGISRRRALASQFTETPVYFNWDVPRTREGYYHFRAGMEAATKRALAFAPYADLLWVETGDPNVEVAAKLGRAVRSVNPGKSLVYNLSPSFNWMAHGFSEEGLKSFIWDIAKEGFTLQLISLAGLHSTATITNELAKKFKTDGMKAYVEVVQRREKELGCDVLTHQKWSGASYIDGILGAIQSGNSSSRSMGEGNTEGQFD.

The tract at residues 154 to 177 is disordered; that stretch reads KAQSMHDRKQWDTRRKMSPDERSK. Residues 157–177 show a composition bias toward basic and acidic residues; sequence SMHDRKQWDTRRKMSPDERSK. Cys-228 is an active-site residue.

The protein belongs to the isocitrate lyase/PEP mutase superfamily. Isocitrate lyase family. The cofactor is Mg(2+).

It is found in the mitochondrion matrix. The enzyme catalyses (2S,3R)-3-hydroxybutane-1,2,3-tricarboxylate = pyruvate + succinate. It functions in the pathway organic acid metabolism; propanoate degradation. Component of the methylcitrate cycle that catalyzes the formation of pyruvate and succinate from 2-methylisocitrate during the metabolism of endogenous propionyl-CoA. Plays an important role for growth and development, but also in antagonism, root colonization and induction of defense responses in plants. This chain is 2-methylisocitrate lyase, mitochondrial, found in Hypocrea atroviridis (strain ATCC 20476 / IMI 206040) (Trichoderma atroviride).